Here is an 845-residue protein sequence, read N- to C-terminus: Nuclear pore complex protein Nup107 (845 aa).

Disordered regions lie at residues 1 to 26 (MADSPFPRSSRSGLLRTTLNSSMPPQ) and 677 to 702 (QNRPKKPQTSHAASSQDNFTERMASE). 2 stretches are compositionally biased toward polar residues: residues 7-26 (PRSSRSGLLRTTLNSSMPPQ) and 685-694 (TSHAASSQDN).

Belongs to the nucleoporin Nup84/Nup107 family. As to quaternary structure, part of the nuclear pore complex (NPC). As to expression, expressed in spermatocytes (at protein level).

The protein localises to the nucleus. It is found in the nuclear pore complex. Its subcellular location is the nucleus envelope. The protein resides in the nucleus membrane. It localises to the cytoplasm. The protein localises to the cytoskeleton. It is found in the spindle. Its subcellular location is the chromosome. The protein resides in the nucleus matrix. Its function is as follows. Plays a role in nuclear pore complex (NPC) assembly and maintenance. Required for nuclear import of Mad. Mediates the association between the nuclear pore complex and a subset of active chromatin regions adjacent to lamin-associated domains. Plays a role in double strand break repair by relocalizing the heterochromatic double strand breaks (DSBs) to the nuclear periphery as part of the homologous recombination (HR) repair process. Regulates cytokinesis during spermatocyte meiosis by maintaining type-B lamin Lam localization to the spindle envelope. Regulates female gonad development and oogenesis. This Drosophila melanogaster (Fruit fly) protein is Nuclear pore complex protein Nup107.